The chain runs to 538 residues: Poly [ADP-ribose] polymerase 2 (538 aa).

Residues Met1–Tyr94 form the WGR domain. Positions Arg104 to Gly133 are disordered. Residues Gln105–Thr126 are compositionally biased toward basic and acidic residues. One can recognise a PARP alpha-helical domain in the interval Val148–Lys285. Positions Glu309–Glu535 constitute a PARP catalytic domain. Positions Gln357–Lys381 are disordered.

It belongs to the ARTD/PARP family.

Its subcellular location is the nucleus. It catalyses the reaction NAD(+) + (ADP-D-ribosyl)n-acceptor = nicotinamide + (ADP-D-ribosyl)n+1-acceptor + H(+).. It carries out the reaction L-aspartyl-[protein] + NAD(+) = 4-O-(ADP-D-ribosyl)-L-aspartyl-[protein] + nicotinamide. The enzyme catalyses L-glutamyl-[protein] + NAD(+) = 5-O-(ADP-D-ribosyl)-L-glutamyl-[protein] + nicotinamide. With respect to regulation, inhibited by N-(6-oxo-5,6-dihydrophenanthridin-2-yl)-N,N-dimethylacetamide HCl (PJ34), 1,5-dihydroxyisoquinoline (DHQ) and 3-aminobenzamide (3AB). In terms of biological role, poly[ADP-ribose] polymerase modifies various nuclear proteins by poly(ADP-ribosyl)ation, a post-translational modification synthesized after DNA damage that appears as an obligatory step in a detection/signaling pathway leading to the reparation of DNA strand breaks and programmed cell death. The chain is Poly [ADP-ribose] polymerase 2 from Caenorhabditis elegans.